The sequence spans 179 residues: ATP synthase subunit delta (179 aa).

Belongs to the ATPase delta chain family. F-type ATPases have 2 components, F(1) - the catalytic core - and F(0) - the membrane proton channel. F(1) has five subunits: alpha(3), beta(3), gamma(1), delta(1), epsilon(1). F(0) has three main subunits: a(1), b(2) and c(10-14). The alpha and beta chains form an alternating ring which encloses part of the gamma chain. F(1) is attached to F(0) by a central stalk formed by the gamma and epsilon chains, while a peripheral stalk is formed by the delta and b chains.

The protein resides in the cell membrane. F(1)F(0) ATP synthase produces ATP from ADP in the presence of a proton or sodium gradient. F-type ATPases consist of two structural domains, F(1) containing the extramembraneous catalytic core and F(0) containing the membrane proton channel, linked together by a central stalk and a peripheral stalk. During catalysis, ATP synthesis in the catalytic domain of F(1) is coupled via a rotary mechanism of the central stalk subunits to proton translocation. Its function is as follows. This protein is part of the stalk that links CF(0) to CF(1). It either transmits conformational changes from CF(0) to CF(1) or is implicated in proton conduction. This chain is ATP synthase subunit delta, found in Metamycoplasma arthritidis (strain 158L3-1) (Mycoplasma arthritidis).